We begin with the raw amino-acid sequence, 119 residues long: C-X-C motif chemokine 17 (119 aa).

The N-terminal stretch at 1–22 (MKLLASPFLLLLPVMLMSMVFS) is a signal peptide. Residues 75-100 (CPCDHVKGREKKNRHQKHHRKSQRPS) are disordered. Intrachain disulfides connect cysteine 75–cysteine 103 and cysteine 77–cysteine 110. The segment covering 82 to 98 (GREKKNRHQKHHRKSQR) has biased composition (basic residues).

This sequence belongs to the intercrine alpha (chemokine CxC) family. In terms of processing, likely to undergo an endoproteolytic process to form a four-cysteine-containing mature peptide with a canonical CXC chemokine scaffold after secretion. In terms of tissue distribution, detected in lung, trachea, lung, tongue thyroid, submaxillary gland, epididymis, and uterus tissues and at a lower level in ovary, prostate and in intestinal tissues.

Its subcellular location is the secreted. In terms of biological role, chemokine that acts as a chemoattractant for monocytes, macrophages and dendritic cells. Plays a role in angiogenesis and possibly in the development of tumors. Acts as an anti-inflammatory in the stomach. May play a role in the innate defense against infections. Activates the C-X-C chemokine receptor GPR35 to induce a rapid and transient rise in the level of intracellular calcium ions. This Mus musculus (Mouse) protein is C-X-C motif chemokine 17 (Cxcl17).